The chain runs to 246 residues: NAD-dependent protein deacylase (246 aa).

Residues 2–246 (PTAVSDAAAP…AGVCLPAMLA (245 aa)) form the Deacetylase sirtuin-type domain. 29-49 (GAGVSAESGVPTFRDALTGLW) lines the NAD(+) pocket. Residues tyrosine 74 and arginine 77 each coordinate substrate. 107–110 (QNVD) contacts NAD(+). Histidine 125 functions as the Proton acceptor in the catalytic mechanism. Zn(2+) is bound by residues cysteine 137, cysteine 140, cysteine 153, and cysteine 156. NAD(+) contacts are provided by residues 193-195 (GTS), 219-221 (NPE), and alanine 237.

The protein belongs to the sirtuin family. Class III subfamily. Zn(2+) serves as cofactor.

It is found in the cytoplasm. The catalysed reaction is N(6)-acetyl-L-lysyl-[protein] + NAD(+) + H2O = 2''-O-acetyl-ADP-D-ribose + nicotinamide + L-lysyl-[protein]. It carries out the reaction N(6)-succinyl-L-lysyl-[protein] + NAD(+) + H2O = 2''-O-succinyl-ADP-D-ribose + nicotinamide + L-lysyl-[protein]. NAD-dependent lysine deacetylase and desuccinylase that specifically removes acetyl and succinyl groups on target proteins. Modulates the activities of several proteins which are inactive in their acylated form. The polypeptide is NAD-dependent protein deacylase (Ralstonia nicotianae (strain ATCC BAA-1114 / GMI1000) (Ralstonia solanacearum)).